The sequence spans 68 residues: MKLCVVIVLLMLAMPFNGGEASRFFNQHARSQRSGMKTRGIWCDPPCPEGETCRGGECSDEFNGDMGR.

The N-terminal stretch at 1–20 (MKLCVVIVLLMLAMPFNGGE) is a signal peptide. Positions 21–68 (ASRFFNQHARSQRSGMKTRGIWCDPPCPEGETCRGGECSDEFNGDMGR) are excised as a propeptide. A Methionine amide modification is found at M66.

In terms of processing, contains 2 disulfide bonds. Expressed by the venom duct.

Its subcellular location is the secreted. Functionally, probable neurotoxin with unknown target. Possibly targets ion channels. The protein is Conotoxin Cal14.13b of Californiconus californicus (California cone).